The chain runs to 159 residues: Transcription elongation factor GreA (159 aa).

Residues 2-77 adopt a coiled-coil conformation; sequence EENKEFLLTQ…LENMVRKAVI (76 aa).

The protein belongs to the GreA/GreB family.

Its function is as follows. Necessary for efficient RNA polymerase transcription elongation past template-encoded arresting sites. The arresting sites in DNA have the property of trapping a certain fraction of elongating RNA polymerases that pass through, resulting in locked ternary complexes. Cleavage of the nascent transcript by cleavage factors such as GreA or GreB allows the resumption of elongation from the new 3'terminus. GreA releases sequences of 2 to 3 nucleotides. This Clostridioides difficile (strain 630) (Peptoclostridium difficile) protein is Transcription elongation factor GreA.